The sequence spans 283 residues: Nicotine 6-hydroxylase medium subunit (283 aa).

The FAD-binding PCMH-type domain occupies 1–176; sequence MKLPAIRYAS…TDVWIPSRPN (176 aa). FAD-binding positions include 31-35 and 110-114; these read AGGQS and TLGGS.

Heterotrimer composed of a large subunit (NdhL), a medium subunit (NdhM) and a small subunit (NdhS). Requires FAD as cofactor.

It localises to the cytoplasm. It catalyses the reaction (R)-nicotine + A + H2O = (R)-6-hydroxynicotine + AH2. The enzyme catalyses (S)-nicotine + A + H2O = (S)-6-hydroxynicotine + AH2. It participates in alkaloid degradation; nicotine degradation; 6-hydroxypseudooxynicotine from nicotine (R-isomer route): step 1/2. It functions in the pathway alkaloid degradation; nicotine degradation; 6-hydroxypseudooxynicotine from nicotine (S-isomer route): step 1/2. Nicotine dehydrogenase activity is inhibited by tungsten. Functionally, component of the nicotine 6-hydroxylase, which is involved in the degradation of nicotine. Catalyzes the hydroxylation of the pyridine ring at C6 to form 6-hydroxynicotine. Can use both L-nicotine and D-nicotine. This Paenarthrobacter nicotinovorans (Arthrobacter nicotinovorans) protein is Nicotine 6-hydroxylase medium subunit.